The primary structure comprises 524 residues: Bifunctional purine biosynthesis protein PurH (524 aa).

One can recognise an MGS-like domain in the interval 1-145 (MIQQALLSVS…KNHRDVTVIV (145 aa)).

The protein belongs to the PurH family.

The catalysed reaction is (6R)-10-formyltetrahydrofolate + 5-amino-1-(5-phospho-beta-D-ribosyl)imidazole-4-carboxamide = 5-formamido-1-(5-phospho-D-ribosyl)imidazole-4-carboxamide + (6S)-5,6,7,8-tetrahydrofolate. The enzyme catalyses IMP + H2O = 5-formamido-1-(5-phospho-D-ribosyl)imidazole-4-carboxamide. It participates in purine metabolism; IMP biosynthesis via de novo pathway; 5-formamido-1-(5-phospho-D-ribosyl)imidazole-4-carboxamide from 5-amino-1-(5-phospho-D-ribosyl)imidazole-4-carboxamide (10-formyl THF route): step 1/1. It functions in the pathway purine metabolism; IMP biosynthesis via de novo pathway; IMP from 5-formamido-1-(5-phospho-D-ribosyl)imidazole-4-carboxamide: step 1/1. The polypeptide is Bifunctional purine biosynthesis protein PurH (Ralstonia pickettii (strain 12J)).